Consider the following 542-residue polypeptide: MHWLRTVAALREQVADWRGSTVGLVPTMGSLHEGHLSLIRRCRQECDHTVVSIFVNPLQFGPNEDWDRYPRDEEGDRALCEAAGVDVVFAPDPQEMGADPATGSDRTWVMPPESLLQTLCAPHRPGHFRGVATIVLQLLNLVQPQRAYFGQKDAQQLAIIQRLVRDLQIPTTIVPCSTVREADGLACSSRNRYLSAAERQVAAGLYRALRRGYDHWQAGDPSAEGILAAARAELEHTPELQLQYLELVDPQTLQPLPRVEDKGLLAIAAYVGQTRLIDNLLLSPEQGDPLPERVQHAAPPSSGTTSPPRRPLIAIDGPAGAGKSTVARAVAAQLQLLYLDTGAMYRAITWLALQRGIPLDDAEQLTQLAAQTQLTLQSGTSSTEPTRIWADGEEITQAIRSPEVTRWVSHVAAVPGVRQELVKRQRSIGRDGGAVLEGRDIGTHVFPDAELKVFLTASVGERAQRRQHQLQAQGQMVPLEELKAQIEQRDRRDSERLISPLRPAPDAILIDTDHLSQSEVQDKIVMLYRQLLERSGPARLDQ.

A pantoate--beta-alanine ligase region spans residues 1–280 (MHWLRTVAAL…VGQTRLIDNL (280 aa)). 28-35 (MGSLHEGH) serves as a coordination point for ATP. Catalysis depends on His-35, which acts as the Proton donor. Residue Gln-59 coordinates (R)-pantoate. Residue Gln-59 participates in beta-alanine binding. Position 150 to 153 (150 to 153 (GQKD)) interacts with ATP. Gln-156 is a binding site for (R)-pantoate. ATP is bound by residues Val-179 and 187 to 190 (CSSR). The segment at 281-542 (LLSPEQGDPL…ERSGPARLDQ (262 aa)) is cytidylate kinase. The disordered stretch occupies residues 287–311 (GDPLPERVQHAAPPSSGTTSPPRRP).

The protein in the N-terminal section; belongs to the pantothenate synthetase family. This sequence in the C-terminal section; belongs to the cytidylate kinase family. Type 1 subfamily.

It localises to the cytoplasm. The catalysed reaction is (R)-pantoate + beta-alanine + ATP = (R)-pantothenate + AMP + diphosphate + H(+). It carries out the reaction CMP + ATP = CDP + ADP. It catalyses the reaction dCMP + ATP = dCDP + ADP. It participates in cofactor biosynthesis; (R)-pantothenate biosynthesis; (R)-pantothenate from (R)-pantoate and beta-alanine: step 1/1. In terms of biological role, catalyzes the condensation of pantoate with beta-alanine in an ATP-dependent reaction via a pantoyl-adenylate intermediate. Its function is as follows. Catalyzes the transfer of a phosphate group from ATP to either CMP or dCMP to form CDP or dCDP and ADP, respectively. This chain is Bifunctional pantoate ligase/cytidylate kinase, found in Synechococcus sp. (strain JA-2-3B'a(2-13)) (Cyanobacteria bacterium Yellowstone B-Prime).